The following is an 89-amino-acid chain: Large ribosomal subunit protein bL27 (89 aa).

The disordered stretch occupies residues 1-21 (MAHKKGASSSRNGRDSNAQRL). Positions 7–19 (ASSSRNGRDSNAQ) are enriched in polar residues.

The protein belongs to the bacterial ribosomal protein bL27 family.

The sequence is that of Large ribosomal subunit protein bL27 from Frankia alni (strain DSM 45986 / CECT 9034 / ACN14a).